Here is a 307-residue protein sequence, read N- to C-terminus: Haloalkane dehalogenase (307 aa).

One can recognise an AB hydrolase-1 domain in the interval 34 to 158 (PVLFLHGNPT…FQAFRTADVG (125 aa)). Asp106 (nucleophile) is an active-site residue. The active-site Proton donor is Glu130. The active-site Proton acceptor is His272.

This sequence belongs to the haloalkane dehalogenase family. Type 2 subfamily. As to quaternary structure, monomer.

It catalyses the reaction 1-haloalkane + H2O = a halide anion + a primary alcohol + H(+). Its pathway is xenobiotic degradation; 1,2-dibromoethane degradation. Functionally, catalyzes hydrolytic cleavage of carbon-halogen bonds in halogenated aliphatic compounds, leading to the formation of the corresponding primary alcohols, halide ions and protons. Has a broad substrate specificity, which includes mono- and di-chlorinated and brominated alkanes. The highest activity was found with 1,2-dibromoethane, whereas low activity was measured with the analog 1,2-dichloroethane. The chain is Haloalkane dehalogenase (dhaAF) from Mycobacterium sp. (strain GP1).